A 379-amino-acid polypeptide reads, in one-letter code: Lipid-A-disaccharide synthase (379 aa).

This sequence belongs to the LpxB family.

It carries out the reaction a lipid X + a UDP-2-N,3-O-bis[(3R)-3-hydroxyacyl]-alpha-D-glucosamine = a lipid A disaccharide + UDP + H(+). The protein operates within bacterial outer membrane biogenesis; LPS lipid A biosynthesis. Its function is as follows. Condensation of UDP-2,3-diacylglucosamine and 2,3-diacylglucosamine-1-phosphate to form lipid A disaccharide, a precursor of lipid A, a phosphorylated glycolipid that anchors the lipopolysaccharide to the outer membrane of the cell. This Vibrio cholerae serotype O1 (strain ATCC 39541 / Classical Ogawa 395 / O395) protein is Lipid-A-disaccharide synthase.